A 273-amino-acid chain; its full sequence is 3-methyl-2-oxobutanoate hydroxymethyltransferase 1 (273 aa).

Mg(2+) contacts are provided by D49 and D88. 3-methyl-2-oxobutanoate contacts are provided by residues 49–50 (DS), D88, and K118. E120 is a binding site for Mg(2+). The active-site Proton acceptor is the E187.

The protein belongs to the PanB family. As to quaternary structure, homodecamer; pentamer of dimers. The cofactor is Mg(2+).

Its subcellular location is the cytoplasm. It carries out the reaction 3-methyl-2-oxobutanoate + (6R)-5,10-methylene-5,6,7,8-tetrahydrofolate + H2O = 2-dehydropantoate + (6S)-5,6,7,8-tetrahydrofolate. It participates in cofactor biosynthesis; (R)-pantothenate biosynthesis; (R)-pantoate from 3-methyl-2-oxobutanoate: step 1/2. In terms of biological role, catalyzes the reversible reaction in which hydroxymethyl group from 5,10-methylenetetrahydrofolate is transferred onto alpha-ketoisovalerate to form ketopantoate. This Pseudomonas aeruginosa (strain UCBPP-PA14) protein is 3-methyl-2-oxobutanoate hydroxymethyltransferase 1.